The sequence spans 96 residues: Mitochondrial import inner membrane translocase subunit Tim13-B (96 aa).

The short motif at 47-70 (CFRKCIGKPGGSLDNSEQKCVAMC) is the Twin CX3C motif element. 2 disulfides stabilise this stretch: cysteine 47-cysteine 70 and cysteine 51-cysteine 66.

It belongs to the small Tim family. Heterohexamer; composed of 3 copies of TIMM8 (TIMM8A or TIMM8B) and 3 copies of TIMM13, named soluble 70 kDa complex. Associates with the TIM22 complex, whose core is composed of TIMM22.

The protein resides in the mitochondrion inner membrane. In terms of biological role, mitochondrial intermembrane chaperone that participates in the import and insertion of some multi-pass transmembrane proteins into the mitochondrial inner membrane. Also required for the transfer of beta-barrel precursors from the TOM complex to the sorting and assembly machinery (SAM complex) of the outer membrane. Acts as a chaperone-like protein that protects the hydrophobic precursors from aggregation and guide them through the mitochondrial intermembrane space. The TIMM8-TIMM13 complex mediates the import of some proteins while the predominant TIMM9-TIMM10 70 kDa complex mediates the import of much more proteins. The chain is Mitochondrial import inner membrane translocase subunit Tim13-B (timm13-b) from Xenopus laevis (African clawed frog).